Here is a 144-residue protein sequence, read N- to C-terminus: MLDAQQIKEIIPHRYPFLLVDRVTEVEEGKRAAGYKNVTVNEEFFNGHFPDYPVMPGVLIVEALAQVGAVALLMKEENRGRLAFFAGIDSCRFKKQVKPGDQLHLELEVLRFRGSIGKGKGVAKVDGEVVCEAELMFSLGEKQE.

The active site involves His48.

Belongs to the thioester dehydratase family. FabZ subfamily.

It is found in the cytoplasm. The enzyme catalyses a (3R)-hydroxyacyl-[ACP] = a (2E)-enoyl-[ACP] + H2O. Its function is as follows. Involved in unsaturated fatty acids biosynthesis. Catalyzes the dehydration of short chain beta-hydroxyacyl-ACPs and long chain saturated and unsaturated beta-hydroxyacyl-ACPs. In Bacillus licheniformis (strain ATCC 14580 / DSM 13 / JCM 2505 / CCUG 7422 / NBRC 12200 / NCIMB 9375 / NCTC 10341 / NRRL NRS-1264 / Gibson 46), this protein is 3-hydroxyacyl-[acyl-carrier-protein] dehydratase FabZ.